Here is a 160-residue protein sequence, read N- to C-terminus: 2-C-methyl-D-erythritol 2,4-cyclodiphosphate synthase (160 aa).

A divalent metal cation contacts are provided by Asp11 and His13. 4-CDP-2-C-methyl-D-erythritol 2-phosphate contacts are provided by residues 11–13 and 37–38; these read DIH and HS. His45 provides a ligand contact to a divalent metal cation. 4-CDP-2-C-methyl-D-erythritol 2-phosphate is bound by residues 59–61, 135–138, and Arg145; these read DIG and TTNE.

It belongs to the IspF family. In terms of assembly, homotrimer. Requires a divalent metal cation as cofactor.

The catalysed reaction is 4-CDP-2-C-methyl-D-erythritol 2-phosphate = 2-C-methyl-D-erythritol 2,4-cyclic diphosphate + CMP. Its pathway is isoprenoid biosynthesis; isopentenyl diphosphate biosynthesis via DXP pathway; isopentenyl diphosphate from 1-deoxy-D-xylulose 5-phosphate: step 4/6. Functionally, involved in the biosynthesis of isopentenyl diphosphate (IPP) and dimethylallyl diphosphate (DMAPP), two major building blocks of isoprenoid compounds. Catalyzes the conversion of 4-diphosphocytidyl-2-C-methyl-D-erythritol 2-phosphate (CDP-ME2P) to 2-C-methyl-D-erythritol 2,4-cyclodiphosphate (ME-CPP) with a corresponding release of cytidine 5-monophosphate (CMP). This chain is 2-C-methyl-D-erythritol 2,4-cyclodiphosphate synthase, found in Nostoc punctiforme (strain ATCC 29133 / PCC 73102).